Consider the following 256-residue polypeptide: DNA repair protein RecO (256 aa).

Belongs to the RecO family.

In terms of biological role, involved in DNA repair and RecF pathway recombination. This Nocardia farcinica (strain IFM 10152) protein is DNA repair protein RecO.